Consider the following 443-residue polypeptide: Signal recognition particle 54 kDa protein (443 aa).

Residues 104–111 (GLQGSGKT), 184–188 (DTAGR), and 242–245 (TKLD) each bind GTP.

The protein belongs to the GTP-binding SRP family. SRP54 subfamily. In terms of assembly, part of the signal recognition particle protein translocation system, which is composed of SRP and FtsY. Archaeal SRP consists of a 7S RNA molecule of 300 nucleotides and two protein subunits: SRP54 and SRP19.

The protein resides in the cytoplasm. It carries out the reaction GTP + H2O = GDP + phosphate + H(+). Functionally, involved in targeting and insertion of nascent membrane proteins into the cytoplasmic membrane. Binds to the hydrophobic signal sequence of the ribosome-nascent chain (RNC) as it emerges from the ribosomes. The SRP-RNC complex is then targeted to the cytoplasmic membrane where it interacts with the SRP receptor FtsY. The protein is Signal recognition particle 54 kDa protein of Methanosarcina barkeri (strain Fusaro / DSM 804).